Reading from the N-terminus, the 278-residue chain is NAD kinase (278 aa).

The active-site Proton acceptor is Asp56. Residues 56–57 (DG), 132–133 (NE), Arg158, Asp160, and 171–176 (TAYNKS) contribute to the NAD(+) site.

This sequence belongs to the NAD kinase family. A divalent metal cation is required as a cofactor.

It is found in the cytoplasm. The catalysed reaction is NAD(+) + ATP = ADP + NADP(+) + H(+). In terms of biological role, involved in the regulation of the intracellular balance of NAD and NADP, and is a key enzyme in the biosynthesis of NADP. Catalyzes specifically the phosphorylation on 2'-hydroxyl of the adenosine moiety of NAD to yield NADP. The protein is NAD kinase of Streptococcus agalactiae serotype V (strain ATCC BAA-611 / 2603 V/R).